The primary structure comprises 203 residues: MTEKLKGTTTVGIVCKDGVVLAADRRASLGNMVLSERVTKVFQIDDHLAIAGAGTVGDILSLVRLLRAEAKLYRAKVSREMSVKALATLTSNILHSGRGFAYMAWFLVGGYDSAPRLYSIDAAGGVTEDRFTAAGSGMEFAFSVLEENYRDGIPLEEGVKLALRAIKAATKRDVFTGGGVTLVTITEEGYREWSEEELKSLLE.

A propeptide spans 1 to 7 (removed in mature form; by autocatalysis); the sequence is MTEKLKG. Thr-8 serves as the catalytic Nucleophile.

It belongs to the peptidase T1B family. The 20S proteasome core is composed of 14 alpha and 14 beta subunits that assemble into four stacked heptameric rings, resulting in a barrel-shaped structure. The two inner rings, each composed of seven catalytic beta subunits, are sandwiched by two outer rings, each composed of seven alpha subunits. The catalytic chamber with the active sites is on the inside of the barrel. Has a gated structure, the ends of the cylinder being occluded by the N-termini of the alpha-subunits. Is capped at one or both ends by the proteasome regulatory ATPase, PAN.

It localises to the cytoplasm. It carries out the reaction Cleavage of peptide bonds with very broad specificity.. The formation of the proteasomal ATPase PAN-20S proteasome complex, via the docking of the C-termini of PAN into the intersubunit pockets in the alpha-rings, triggers opening of the gate for substrate entry. Interconversion between the open-gate and close-gate conformations leads to a dynamic regulation of the 20S proteasome proteolysis activity. Functionally, component of the proteasome core, a large protease complex with broad specificity involved in protein degradation. The chain is Proteasome subunit beta 1 from Thermococcus kodakarensis (strain ATCC BAA-918 / JCM 12380 / KOD1) (Pyrococcus kodakaraensis (strain KOD1)).